We begin with the raw amino-acid sequence, 54 residues long: Insulin (54 aa).

Disulfide bonds link Cys-7/Cys-39, Cys-19/Cys-52, and Cys-38/Cys-43.

Belongs to the insulin family. In terms of assembly, heterodimer of a B chain and an A chain linked by two disulfide bonds.

Its subcellular location is the secreted. Functionally, insulin decreases blood glucose concentration. It increases cell permeability to monosaccharides, amino acids and fatty acids. It accelerates glycolysis, the pentose phosphate cycle, and glycogen synthesis in liver. The chain is Insulin (ins) from Squalus acanthias (Spiny dogfish).